The chain runs to 349 residues: Inositol-tetrakisphosphate 1-kinase 2 (349 aa).

1D-myo-inositol 1,3,4-trisphosphate is bound by residues lysine 48 and lysine 90. Positions 125 and 175 each coordinate ATP. 2 residues coordinate 1D-myo-inositol 1,3,4-trisphosphate: histidine 186 and lysine 218. ATP-binding positions include 207–218 (QEFVNHGGILFK) and serine 233. Residues aspartate 298, aspartate 313, and asparagine 315 each contribute to the Mg(2+) site. A 1D-myo-inositol 1,3,4-trisphosphate-binding site is contributed by asparagine 315.

This sequence belongs to the ITPK1 family. In terms of assembly, monomer. Requires Mg(2+) as cofactor.

It carries out the reaction 1D-myo-inositol 3,4,5,6-tetrakisphosphate + ATP = 1D-myo-inositol 1,3,4,5,6-pentakisphosphate + ADP + H(+). The catalysed reaction is 1D-myo-inositol 1,3,4-trisphosphate + ATP = 1D-myo-inositol 1,3,4,5-tetrakisphosphate + ADP + H(+). It catalyses the reaction 1D-myo-inositol 1,3,4-trisphosphate + ATP = 1D-myo-inositol 1,3,4,6-tetrakisphosphate + ADP + H(+). Kinase that can phosphorylate various inositol polyphosphate such as Ins(3,4,5,6)P4 or Ins(1,3,4)P3 and participates in phytic acid biosynthesis in developing seeds. Phytic acid is the primary storage form of phosphorus in cereal grains and other plant seeds. In Oryza sativa subsp. indica (Rice), this protein is Inositol-tetrakisphosphate 1-kinase 2 (ITPK2).